The chain runs to 256 residues: GCN5-related N-acetyltransferase 10, chloroplastic (256 aa).

The transit peptide at 1–41 (MGHLPQSLYSAAGPKFPYPGSSGLGVDQRKLTWSRFPVFLR) directs the protein to the chloroplast. The region spanning 106–256 (FMFFQAEVLS…RRVLMSKRFS (151 aa)) is the N-acetyltransferase domain. Acetyl-CoA-binding positions include 178–180 (LAV), 186–191 (RKKMAS), 217–219 (DAA), and Y224. Catalysis depends on Y224, which acts as the Proton donor.

It belongs to the acetyltransferase family. GNAT subfamily. As to quaternary structure, oligomer. Autoacetylated. In terms of tissue distribution, expressed in green tissues.

The protein resides in the plastid. The protein localises to the chloroplast. It carries out the reaction an N-terminal L-alpha-aminoacyl-[protein] + acetyl-CoA = N-terminal N(alpha)-acetyl-L-alpha-aminoacyl-[protein] + CoA + H(+). It catalyses the reaction L-lysyl-[protein] + acetyl-CoA = N(6)-acetyl-L-lysyl-[protein] + CoA + H(+). The enzyme catalyses N-terminal L-methionyl-[protein] + acetyl-CoA = N-terminal N(alpha)-acetyl-L-methionyl-[protein] + CoA + H(+). The catalysed reaction is N-terminal L-seryl-[protein] + acetyl-CoA = N-terminal N(alpha)-acetyl-L-seryl-[protein] + CoA + H(+). It carries out the reaction N-terminal L-valyl-[protein] + acetyl-CoA = N-terminal N(alpha)-acetyl-L-valyl-[protein] + CoA + H(+). It catalyses the reaction N-terminal L-threonyl-[protein] + acetyl-CoA = N-terminal N(alpha)-acetyl-L-threonyl-[protein] + CoA + H(+). The enzyme catalyses N-terminal L-alanyl-[protein] + acetyl-CoA = N-terminal N(alpha)-acetyl-L-alanyl-[protein] + CoA + H(+). The catalysed reaction is N-terminal glycyl-[protein] + acetyl-CoA = N-terminal N(alpha)-acetylglycyl-[protein] + CoA + H(+). Its function is as follows. Protein acetyltransferase with dual specificity triggering both N-alpha-acetylation (NTA), with a preference for leucine, methionine, serine, valine and to a lower extent threonine and alanine as substrates (can also use glycine), and epsilon-lysine acetylation (KA) of several plastid proteins. In Arabidopsis thaliana (Mouse-ear cress), this protein is GCN5-related N-acetyltransferase 10, chloroplastic.